The sequence spans 594 residues: Cytosolic Fe-S cluster assembly factor NAR1 (594 aa).

[4Fe-4S] cluster is bound by residues cysteine 20, cysteine 88, cysteine 91, cysteine 94, cysteine 209, and cysteine 264. A disordered region spans residues arginine 444–alanine 465. Low complexity predominate over residues serine 454–alanine 465. [4Fe-4S] cluster contacts are provided by cysteine 481 and cysteine 485. Residues isoleucine 492–alanine 511 form a disordered region.

It belongs to the NARF family.

Component of the cytosolic Fe/S protein assembly machinery. Required for maturation of extramitochondrial Fe/S proteins. May play a role in the transfer of pre-assembled Fe/S clusters to target apoproteins. In Lodderomyces elongisporus (strain ATCC 11503 / CBS 2605 / JCM 1781 / NBRC 1676 / NRRL YB-4239) (Yeast), this protein is Cytosolic Fe-S cluster assembly factor NAR1 (NAR1).